We begin with the raw amino-acid sequence, 248 residues long: Small ribosomal subunit protein uS3 (248 aa).

Positions 38–106 (VREYLVKTLD…QVALNILEVK (69 aa)) constitute a KH type-2 domain. Basic and acidic residues predominate over residues 213–230 (ESEINAPAERRGRGDRNG). Residues 213-248 (ESEINAPAERRGRGDRNGRPRRGGQRRQRSEQKQEG) form a disordered region.

The protein belongs to the universal ribosomal protein uS3 family. Part of the 30S ribosomal subunit. Forms a tight complex with proteins S10 and S14.

Binds the lower part of the 30S subunit head. Binds mRNA in the 70S ribosome, positioning it for translation. The sequence is that of Small ribosomal subunit protein uS3 from Corynebacterium diphtheriae (strain ATCC 700971 / NCTC 13129 / Biotype gravis).